The following is a 119-amino-acid chain: T cell receptor alpha variable 29/delta variable 5 (119 aa).

A signal peptide spans 1–21 (MAMLLGASVLILWLQPDWVNS). The region spanning 22-119 (QQKNDDQQVK…DSAVYFCAAS (98 aa)) is the Ig-like domain. Cysteines 49 and 116 form a disulfide. N-linked (GlcNAc...) asparagine glycosylation is present at asparagine 93.

In terms of assembly, alpha-beta TR is a heterodimer composed of an alpha and beta chain; disulfide-linked. The alpha-beta TR is associated with the transmembrane signaling CD3 coreceptor proteins to form the TR-CD3 (TcR or TCR). The assembly of alpha-beta TR heterodimers with CD3 occurs in the endoplasmic reticulum where a single alpha-beta TR heterodimer associates with one CD3D-CD3E heterodimer, one CD3G-CD3E heterodimer and one CD247 homodimer forming a stable octameric structure. CD3D-CD3E and CD3G-CD3E heterodimers preferentially associate with TR alpha and TR beta chains, respectively. The association of the CD247 homodimer is the last step of TcR assembly in the endoplasmic reticulum and is required for transport to the cell surface.

It localises to the cell membrane. Functionally, v region of the variable domain of T cell receptor (TR) alpha chain that participates in the antigen recognition. Alpha-beta T cell receptors are antigen specific receptors which are essential to the immune response and are present on the cell surface of T lymphocytes. Recognize peptide-major histocompatibility (MH) (pMH) complexes that are displayed by antigen presenting cells (APC), a prerequisite for efficient T cell adaptive immunity against pathogens. Binding of alpha-beta TR to pMH complex initiates TR-CD3 clustering on the cell surface and intracellular activation of LCK that phosphorylates the ITAM motifs of CD3G, CD3D, CD3E and CD247 enabling the recruitment of ZAP70. In turn ZAP70 phosphorylates LAT, which recruits numerous signaling molecules to form the LAT signalosome. The LAT signalosome propagates signal branching to three major signaling pathways, the calcium, the mitogen-activated protein kinase (MAPK) kinase and the nuclear factor NF-kappa-B (NF-kB) pathways, leading to the mobilization of transcription factors that are critical for gene expression and essential for T cell growth and differentiation. The T cell repertoire is generated in the thymus, by V-(D)-J rearrangement. This repertoire is then shaped by intrathymic selection events to generate a peripheral T cell pool of self-MH restricted, non-autoaggressive T cells. Post-thymic interaction of alpha-beta TR with the pMH complexes shapes TR structural and functional avidity. This Homo sapiens (Human) protein is T cell receptor alpha variable 29/delta variable 5.